Reading from the N-terminus, the 404-residue chain is 11-beta-hydroxysteroid dehydrogenase type 2 (404 aa).

82 to 111 (TRAVLITGCDSGFGNATAKKLDTMGFTVLA) is an NAD(+) binding site. S219 is a binding site for substrate. Y232 serves as the catalytic Proton acceptor. The disordered stretch occupies residues 383–404 (LTSARDIAQDQGPRPDPSPTAQ).

Belongs to the short-chain dehydrogenases/reductases (SDR) family. In terms of assembly, interacts with ligand-free cytoplasmic NR3C2. In terms of tissue distribution, highly expressed in kidney, adrenal and colon; detected at lower levels on lung, liver, and spleen. Expressed in oocytes. Expressed in uterine tissues and in corpora lutea.

Its subcellular location is the microsome. The protein localises to the endoplasmic reticulum. The catalysed reaction is an 11beta-hydroxysteroid + NAD(+) = an 11-oxosteroid + NADH + H(+). The enzyme catalyses corticosterone + NAD(+) = 11-dehydrocorticosterone + NADH + H(+). It catalyses the reaction cortisol + NAD(+) = cortisone + NADH + H(+). It carries out the reaction 11beta,17beta-dihydroxyandrost-4-ene-3-one + NAD(+) = 17beta-hydroxyandrost-4-ene-3,11-dione + NADH + H(+). The catalysed reaction is 11beta-hydroxyandrost-4-ene-3,17-dione + NAD(+) = androst-4-ene-3,11,17-trione + NADH + H(+). It participates in steroid metabolism. Inhibited by glycyrrhetinic acid, carbenoloxone, 11-alpha-OH-progesterone and 11-beta-OH-progesterone. Functionally, catalyzes the conversion of biologically active 11beta-hydroxyglucocorticoids (11beta-hydroxysteroid) such as cortisol, to inactive 11-ketoglucocorticoids (11-oxosteroid) such as cortisone, in the presence of NAD(+). Functions as a dehydrogenase (oxidase), thereby decreasing the concentration of active glucocorticoids, thus protecting the nonselective mineralocorticoid receptor from occupation by glucocorticoids. Affinity towards corticosterone is higher than cortisol or dexamethasone. Plays an important role in maintaining glucocorticoids balance during preimplantation and protects the fetus from excessive maternal corticosterone exposure. Catalyzes the oxidation of 11beta-hydroxytestosterone (11beta,17beta-dihydroxyandrost-4-ene-3-one) to 11-ketotestosterone (17beta-hydroxyandrost-4-ene-3,11-dione), a major bioactive androgen. Catalyzes the conversion of 11beta-hydroxyandrostenedione (11beta-hydroxyandrost-4-ene-3,17-dione) to 11-ketoandrostenedione (androst-4-ene-3,11,17-trione), which can be further metabolized to 11-ketotestosterone. Converts 7-beta-25-dihydroxycholesterol to 7-oxo-25-hydroxycholesterol in vitro. 7-beta-25-dihydroxycholesterol (not 7-oxo-25-hydroxycholesterol) acts as ligand for the G-protein-coupled receptor (GPCR) Epstein-Barr virus-induced gene 2 (EBI2) and may thereby regulate immune cell migration. May protect ovulating oocytes and fertilizing spermatozoa from the adverse effects of cortisol. This is 11-beta-hydroxysteroid dehydrogenase type 2 (HSD11B2) from Bos taurus (Bovine).